We begin with the raw amino-acid sequence, 102 residues long: Putative sortase YwpE (102 aa).

His-17 serves as the catalytic Proton donor/acceptor. Catalysis depends on Cys-78, which acts as the Acyl-thioester intermediate.

It belongs to the bacterial sortase family.

In terms of biological role, seems not to play a major role if any as a sortase. The protein is Putative sortase YwpE (ywpE) of Bacillus subtilis (strain 168).